The following is an 873-amino-acid chain: MESKVIVIHHGSHSLKIGLASESVPKTIPNYIARKKKEKISTPTITTTETPTIVSPVESTIINNKSNENNDDIMKIDVENTVTPSEAVGTTTEDVKSTLPMATTITTDEQVKPTSSTSSTSTTEEVEIKPTESMDIDKPITDSKTNITSNIKIEQPPPPINIQTQTKIHIPKKLLEEVEQSVKETTKLLPPVDYIKVRQKPTLYNENNSTTFEIIKKKKKKTSSLSSLTNVSTTPPPYVPQPLNYNEIDYCIGDDAIAVSRDKDKWFAYQPITMSTFNTGIYHSVQSMFDDITQMWKYAIQRYLNIPSSDLSSYGCVYVVTDNIDRKSLKQITTLLLKELQFTSVLFFQESICSSFGVSMATQSCVIDLGHQKISIACVDEGYLLPNTRLTLGYGGEQLTKLLEYLLTGMDKSDSDTLTRQMVAKQIHKYYFPFKSSIYELVDFSPFYLNVFDNIKIENLDYYYNDFQKQRVGTFKVKDIKHDKHMNIYHFNADEVYQVVGMSLFYPNILSQFGGSSVNYLIKSRSLANTSESNLYVEDQKHYYNHYLSSYDHEDPFDDHSHILSFAQNNTSRDNKDGSNNNNIINNNIINNIINNNNNNNNNSSSSSNNNNNNNNSGSNSNINSYNNNNNNNNNNNNNNNNNNNNSFNNVTIVTSTLNSNSTVPSTLNSNSTVPSISNSNSTVPSTSTSTTSSPTKKLKIESSSNCEDNYIDIPLDIAILKSVSQLERSDINKKKYLSNILLVGGGALAPGIQDVLRVCIFKQLEQQYQAQQLQFQQQLQQQQQQQQQLQQQLQNSTNSATTTPTPSSTTIMPLENYIGFANSSIRSDVDCRHAGWRGGAILGCLESTREIWITRSEWQDGKNSSALNKLPF.

The segment at Asp-108 to Lys-129 is disordered. The segment covering Thr-114–Thr-123 has biased composition (low complexity). Position 368–371 (Asp-368–His-371) interacts with ATP. Residues Asn-596 to Asn-650 show a composition bias toward low complexity. The tract at residues Asn-596–Ile-701 is disordered. Positions Val-651–Leu-668 are enriched in polar residues. Positions Asn-669–Thr-696 are enriched in low complexity. Positions Phe-762 to Thr-804 form a coiled coil.

This sequence belongs to the actin family. ARP8 subfamily. As to quaternary structure, component of the chromatin remodeling INO80 complex. Exists as monomers and dimers, but the dimer is most probably the biologically relevant form required for stable interactions with histones that exploits the twofold symmetry of the nucleosome core.

It is found in the nucleus. Its subcellular location is the cytoplasm. The protein localises to the cytoskeleton. In terms of biological role, plays an important role in the functional organization of mitotic chromosomes. Exhibits low basal ATPase activity, and unable to polymerize. Its function is as follows. Proposed core component of the chromatin remodeling INO80 complex which is involved in transcriptional regulation, DNA replication and probably DNA repair. Strongly prefer nucleosomes and H3-H4 tetramers over H2A-H2B dimers, suggesting it may act as a nucleosome recognition module within the complex. The protein is Actin-related protein 8 of Dictyostelium discoideum (Social amoeba).